The primary structure comprises 207 residues: Ribosomal RNA small subunit methyltransferase G (207 aa).

Residues Gly73, Leu78, Val124 to Glu125, and Arg139 each bind S-adenosyl-L-methionine.

It belongs to the methyltransferase superfamily. RNA methyltransferase RsmG family.

Its subcellular location is the cytoplasm. It catalyses the reaction guanosine(527) in 16S rRNA + S-adenosyl-L-methionine = N(7)-methylguanosine(527) in 16S rRNA + S-adenosyl-L-homocysteine. Its function is as follows. Specifically methylates the N7 position of guanine in position 527 of 16S rRNA. This chain is Ribosomal RNA small subunit methyltransferase G, found in Escherichia coli O1:K1 / APEC.